Reading from the N-terminus, the 310-residue chain is Ribosomal RNA small subunit methyltransferase H (310 aa).

Residues 33 to 35 (GGH), Asp-52, Phe-79, Asp-98, and Gln-105 each bind S-adenosyl-L-methionine.

Belongs to the methyltransferase superfamily. RsmH family.

The protein resides in the cytoplasm. The catalysed reaction is cytidine(1402) in 16S rRNA + S-adenosyl-L-methionine = N(4)-methylcytidine(1402) in 16S rRNA + S-adenosyl-L-homocysteine + H(+). In terms of biological role, specifically methylates the N4 position of cytidine in position 1402 (C1402) of 16S rRNA. In Campylobacter jejuni (strain RM1221), this protein is Ribosomal RNA small subunit methyltransferase H.